A 151-amino-acid chain; its full sequence is Small ribosomal subunit protein uS9 (151 aa).

Belongs to the universal ribosomal protein uS9 family.

The chain is Small ribosomal subunit protein uS9 (rps9) from Aeropyrum pernix (strain ATCC 700893 / DSM 11879 / JCM 9820 / NBRC 100138 / K1).